The sequence spans 345 residues: MEKIKVIVVDDSVLMRRLICDMLESNDNIEVIGTAINGQDLLNKLKVMKPDVITLDIEMPVMNGIETLKAVKSLKIDIPIIVFSSISQKGMKYTMECLYLGAFDFIPKPEKPFELSKMKDDLIKRIRVAYSQNTNKNPAPINPVIRRETNRISSDSIEAVVIGASTGGPKALYKVITKFPKDMNVPVFVVQHMPVGFTKAFADRLNDNSAIEVKEATDGETYRKGVVYVAPGGYHMEVDSNSRIKLTKEPPIWGVRPAVDKLFISASKIFKSHIVSAVLTGMGKDGSNGTGIIKDNGGVTISESETTCVIYGMPKAAFETGKVDLVVPIDNVADEIIKIVRGLRR.

Residues 5 to 123 (KVIVVDDSVL…ELSKMKDDLI (119 aa)) form the Response regulatory domain. Asp-56 is subject to 4-aspartylphosphate. A CheB-type methylesterase domain is found at 153-343 (SSDSIEAVVI…DEIIKIVRGL (191 aa)). Active-site residues include Ser-165, His-192, and Asp-285.

Belongs to the CheB family. In terms of processing, phosphorylated by CheA. Phosphorylation of the N-terminal regulatory domain activates the methylesterase activity.

It is found in the cytoplasm. It catalyses the reaction [protein]-L-glutamate 5-O-methyl ester + H2O = L-glutamyl-[protein] + methanol + H(+). The enzyme catalyses L-glutaminyl-[protein] + H2O = L-glutamyl-[protein] + NH4(+). Involved in chemotaxis. Part of a chemotaxis signal transduction system that modulates chemotaxis in response to various stimuli. Catalyzes the demethylation of specific methylglutamate residues introduced into the chemoreceptors (methyl-accepting chemotaxis proteins or MCP) by CheR. Also mediates the irreversible deamidation of specific glutamine residues to glutamic acid. This chain is Protein-glutamate methylesterase/protein-glutamine glutaminase, found in Clostridium acetobutylicum (strain ATCC 824 / DSM 792 / JCM 1419 / IAM 19013 / LMG 5710 / NBRC 13948 / NRRL B-527 / VKM B-1787 / 2291 / W).